A 22-amino-acid chain; its full sequence is Probable ATP-dependent Clp protease proteolytic subunit (22 aa).

This sequence belongs to the peptidase S14 family. As to quaternary structure, component of the chloroplastic Clp protease core complex.

The enzyme catalyses Hydrolysis of proteins to small peptides in the presence of ATP and magnesium. alpha-casein is the usual test substrate. In the absence of ATP, only oligopeptides shorter than five residues are hydrolyzed (such as succinyl-Leu-Tyr-|-NHMec, and Leu-Tyr-Leu-|-Tyr-Trp, in which cleavage of the -Tyr-|-Leu- and -Tyr-|-Trp bonds also occurs).. Its function is as follows. Cleaves peptides in various proteins in a process that requires ATP hydrolysis. Has a chymotrypsin-like activity. Plays a major role in the degradation of misfolded proteins. The polypeptide is Probable ATP-dependent Clp protease proteolytic subunit (Populus euphratica (Euphrates poplar)).